We begin with the raw amino-acid sequence, 402 residues long: DNA replication and repair protein RecF (402 aa).

An ATP-binding site is contributed by 30-37; that stretch reads GYNGIGKT.

Belongs to the RecF family.

The protein localises to the cytoplasm. In terms of biological role, the RecF protein is involved in DNA metabolism; it is required for DNA replication and normal SOS inducibility. RecF binds preferentially to single-stranded, linear DNA. It also seems to bind ATP. This chain is DNA replication and repair protein RecF, found in Pseudarthrobacter chlorophenolicus (strain ATCC 700700 / DSM 12829 / CIP 107037 / JCM 12360 / KCTC 9906 / NCIMB 13794 / A6) (Arthrobacter chlorophenolicus).